Reading from the N-terminus, the 241-residue chain is Interleukin-6 (241 aa).

Positions Met-1–Pro-25 are disordered. The first 46 residues, Met-1–Ala-46, serve as a signal peptide directing secretion. An intrachain disulfide couples Cys-122 to Cys-132.

It belongs to the IL-6 superfamily. In terms of assembly, component of a hexamer of two molecules each of IL6, IL6R and IL6ST; first binds to IL6R to associate with the signaling subunit IL6ST.

It localises to the secreted. In terms of biological role, cytokine with a wide variety of biological functions in immunity, tissue regeneration, and metabolism. Binds to IL6R, then the complex associates to the signaling subunit IL6ST/gp130 to trigger the intracellular IL6-signaling pathway. The interaction with the membrane-bound IL6R and IL6ST stimulates 'classic signaling', whereas the binding of IL6 and soluble IL6R to IL6ST stimulates 'trans-signaling'. Alternatively, 'cluster signaling' occurs when membrane-bound IL6:IL6R complexes on transmitter cells activate IL6ST receptors on neighboring receiver cells. This chain is Interleukin-6 (IL6), found in Gallus gallus (Chicken).